The primary structure comprises 89 residues: Exodeoxyribonuclease 7 small subunit (89 aa).

Belongs to the XseB family. As to quaternary structure, heterooligomer composed of large and small subunits.

The protein resides in the cytoplasm. The enzyme catalyses Exonucleolytic cleavage in either 5'- to 3'- or 3'- to 5'-direction to yield nucleoside 5'-phosphates.. Its function is as follows. Bidirectionally degrades single-stranded DNA into large acid-insoluble oligonucleotides, which are then degraded further into small acid-soluble oligonucleotides. This chain is Exodeoxyribonuclease 7 small subunit, found in Chlorobium phaeobacteroides (strain DSM 266 / SMG 266 / 2430).